Consider the following 225-residue polypeptide: Cyclin-dependent kinase inhibitor 3 (225 aa).

2 disordered regions span residues 47-94 and 130-169; these read AAAA…QRRR and ERKS…PLSP. Over residues 55-67 the composition is skewed to basic residues; the sequence is CRRRHRRGGRRGC. Residues 71-82 show a composition bias toward low complexity; that stretch reads GAGSARACGARS. Residues 143 to 153 show a composition bias toward basic and acidic residues; sequence VAAEHAGEHKH.

It belongs to the CDI family. ICK/KRP subfamily.

The protein is Cyclin-dependent kinase inhibitor 3 (KRP3) of Oryza sativa subsp. japonica (Rice).